Consider the following 544-residue polypeptide: MAKQLLFNEEARKSLLAGVEQISNAVKVTLGPKGRNVLIDKSFGAPTVTKDGVSVAREVELENKFENMGAQLLKEVATKTNDVAGDGTTTATVLAYSMVKEGLKAVAAGMTPLELKRGIDKAVAIAVEDIQKNSKEIKGSEEVAHVASVSANNDAEIGKIIADAIAKVGKDGVIDVGEAQTMETVTDYVEGMQFDRGYISSYFVTDRDRMETVFENPYILIYDKSISTMKDLLPLLEQVAQSGRPLLIIAEDVEGEALATLVVNSLRGALKTCAVKAPGFGDRRKEMLEDIAVLTGGQVVSEELGFKLEAAQISMLGQAKSIKIDKDNTMIIDGAGKSKDIKDRVTQIKAQLDATDSEYDSEKLRERLAKLSGGVAVIKIGAVTEVEMKEKKHRVEDALSATRAAIEEGIVAGGGLAMIQAIAALEKADMSSLTEDEKVGFKIVKRALEEPIRQIAENAGLDGAVIAEKAKEKKGVGFDAAKMEWTDMVKAGIIDPAKVTRSALQNAASIASLLLTTECAITDIPEKQAGPAMPSPDMGGMGMY.

Residues 29–32 (TLGP), Lys-50, 86–90 (DGTTT), Gly-414, 479–481 (DAA), and Asp-495 contribute to the ATP site.

This sequence belongs to the chaperonin (HSP60) family. In terms of assembly, forms a cylinder of 14 subunits composed of two heptameric rings stacked back-to-back. Interacts with the co-chaperonin GroES.

The protein resides in the cytoplasm. The enzyme catalyses ATP + H2O + a folded polypeptide = ADP + phosphate + an unfolded polypeptide.. In terms of biological role, together with its co-chaperonin GroES, plays an essential role in assisting protein folding. The GroEL-GroES system forms a nano-cage that allows encapsulation of the non-native substrate proteins and provides a physical environment optimized to promote and accelerate protein folding. This Treponema denticola (strain ATCC 35405 / DSM 14222 / CIP 103919 / JCM 8153 / KCTC 15104) protein is Chaperonin GroEL.